The following is a 170-amino-acid chain: Endoribonuclease YbeY (170 aa).

Zn(2+) is bound by residues His118, His122, and His128.

Belongs to the endoribonuclease YbeY family. Zn(2+) is required as a cofactor.

The protein resides in the cytoplasm. Single strand-specific metallo-endoribonuclease involved in late-stage 70S ribosome quality control and in maturation of the 3' terminus of the 16S rRNA. This chain is Endoribonuclease YbeY, found in Mycobacteroides abscessus (strain ATCC 19977 / DSM 44196 / CCUG 20993 / CIP 104536 / JCM 13569 / NCTC 13031 / TMC 1543 / L948) (Mycobacterium abscessus).